Reading from the N-terminus, the 591-residue chain is Pentatricopeptide repeat-containing protein At2g35130 (591 aa).

PPR repeat units follow at residues D154–P188, T189–P223, G227–P262, T263–P297, N298–P332, D333–P367, D368–P402, T403–P437, D438–A472, D473–P507, D508–P542, and D543–G573.

This sequence belongs to the PPR family. P subfamily.

In Arabidopsis thaliana (Mouse-ear cress), this protein is Pentatricopeptide repeat-containing protein At2g35130.